The primary structure comprises 865 residues: Alanine--tRNA ligase (865 aa).

Residues His552, His556, Cys654, and His658 each contribute to the Zn(2+) site.

This sequence belongs to the class-II aminoacyl-tRNA synthetase family. Requires Zn(2+) as cofactor.

Its subcellular location is the cytoplasm. It catalyses the reaction tRNA(Ala) + L-alanine + ATP = L-alanyl-tRNA(Ala) + AMP + diphosphate. Its function is as follows. Catalyzes the attachment of alanine to tRNA(Ala) in a two-step reaction: alanine is first activated by ATP to form Ala-AMP and then transferred to the acceptor end of tRNA(Ala). Also edits incorrectly charged Ser-tRNA(Ala) and Gly-tRNA(Ala) via its editing domain. This is Alanine--tRNA ligase from Coxiella burnetii (strain RSA 331 / Henzerling II).